We begin with the raw amino-acid sequence, 447 residues long: Tetratricopeptide repeat protein 23 (447 aa).

TPR repeat units follow at residues 45-78 (LHLC…TRIC), 137-170 (IELF…SKEL), 186-219 (ARIR…VEIS), and 356-389 (AETY…QTLL).

In terms of assembly, found Associated with the EvC complex composed of EFCAB7, IQCE, EVC2 and EVC.

Its subcellular location is the cell projection. It localises to the cilium. Participates positively in the ciliary Hedgehog (Hh) signaling. The protein is Tetratricopeptide repeat protein 23 (TTC23) of Homo sapiens (Human).